We begin with the raw amino-acid sequence, 98 residues long: N(2)-fixation sustaining protein CowN (98 aa).

Belongs to the CowN family.

In terms of biological role, is required to sustain N(2)-dependent growth in the presence of low levels of carbon monoxide (CO). Probably acts by protecting the N(2) fixation ability of the nitrogenase complex, which is inactivated in the presence of CO. This Trichlorobacter lovleyi (strain ATCC BAA-1151 / DSM 17278 / SZ) (Geobacter lovleyi) protein is N(2)-fixation sustaining protein CowN.